Consider the following 949-residue polypeptide: MKYLASFRTTLKASRYMFRALALVLWLLIAFSSVFYIVNALHQRESEIRQEFNLSSDQAQRFIQRTSDVMKELKYIAENRLSAENGVLSPRGRETQADVPAFEPLFADSDCSAMSNTWRGSLESLAWFIGYWRDNFSAAYDLNRVFLIGSDNLCMANFGLRDMPVERDTALKALHERINKYRNAPQDDSGSNLYWISEGPRPGVGYFYALTPVYLANRLQALLGVEQTIRMENFFLPGTLPMGVTILDENGHTLISLTGPESKIKGDPRWMQERSWFGYTEGFRELVLKKNLPPSSLSIVYSVPVDKVLERIRMVILNAILLNVLAGAALFTLARMYERRIFIPAESDALRLEEHEQFNRKIVASAPVGICILRTADGVNILSNELAHTYLNMLTHEDRQRLTQIICGQQVNFVDVLTSNNTNLQISFVHSRYRNENVAICVLVDVSSRVKMEESLQEMAQAAEQASQSKSMFLATVSHELRTPLYGIIGNLDLLQTKELPKGVDRLVTAMNNSSSLLLKIISDILDFSKIESEQLKIEPREFSPREVMNHITANYLPLVVRKQLGLYCFIEPDVPVALNGDPMRLQQVISNLLSNAIKFTDTGCIVLHVRADGDYLSIRVRDTGVGIPAKEVVRLFDPFFQVGTGVQRNFQGTGLGLAICEKLISMMDGDISVDSEPGMGSQFTVRIPLYGAQYPQKKGVEGLSGKRCWLAVRNASLCQFLETSLQRSGIVVTTYEGQEPTPEDVLITDEVVSKKWQGRAVVTFCRRHIGIPLEEAPGEWVHSVAAPHELPALLARIYLIEMESDDPANALPSTDKAVSDNDDMMILVVDDHPINRRLLADQLGSLGYQCKTANDGVDALNVLSKNHIDIVLSDVNMPNMDGYRLTQRTRQLGLTLPVIGVTANALAEEKQRCLESGMDSCLSKPVTLDVIKQTLTVYAERVRKSRES.

The Cytoplasmic segment spans residues methionine 1–arginine 19. A helical membrane pass occupies residues alanine 20–leucine 41. Residues histidine 42 to arginine 313 lie on the Periplasmic side of the membrane. A helical membrane pass occupies residues methionine 314–arginine 335. Residues methionine 336–serine 949 lie on the Cytoplasmic side of the membrane. The 69-residue stretch at glutamine 357 to glutamine 425 folds into the PAS domain. A Histidine kinase domain is found at threonine 476 to glycine 692. Phosphohistidine; by autocatalysis is present on histidine 479. In terms of domain architecture, ABL spans serine 705 to serine 805. A Response regulatory domain is found at methionine 826–alanine 940. The residue at position 875 (aspartate 875) is a 4-aspartylphosphate.

It belongs to the RcsC family. As to quaternary structure, interacts with RcsD. In terms of processing, autophosphorylated. Activation probably requires a transfer of a phosphate group from a His in the transmitter domain to an Asp in the receiver domain.

It localises to the cell inner membrane. The catalysed reaction is ATP + protein L-histidine = ADP + protein N-phospho-L-histidine.. Its function is as follows. Component of the Rcs signaling system, which controls transcription of numerous genes. RcsC functions as a membrane-associated protein kinase that phosphorylates RcsD in response to environmental signals. The phosphoryl group is then transferred to the response regulator RcsB. Involved in regulation of K30 capsular polysaccharide synthesis. This Escherichia coli protein is Sensor histidine kinase RcsC.